The sequence spans 591 residues: CTP synthase 1-B (591 aa).

Residues 300–554 (SIALVGKYTK…LASVGRLSQY (255 aa)) form the Glutamine amidotransferase type-1 domain. Residues cysteine 399, histidine 526, and glutamate 528 each act as for GATase activity in the active site. A compositionally biased stretch (basic and acidic residues) spans 562-572 (SPRDTYSDRSE). Residues 562 to 581 (SPRDTYSDRSENSSPDAEIA) are disordered.

It belongs to the CTP synthase family.

It carries out the reaction UTP + L-glutamine + ATP + H2O = CTP + L-glutamate + ADP + phosphate + 2 H(+). It functions in the pathway pyrimidine metabolism; CTP biosynthesis via de novo pathway; CTP from UDP: step 2/2. Functionally, this enzyme is involved in the de novo synthesis of CTP, a precursor of DNA, RNA and phospholipids. Catalyzes the ATP-dependent amination of UTP to CTP with either L-glutamine or ammonia as a source of nitrogen. The polypeptide is CTP synthase 1-B (ctps1-b) (Xenopus laevis (African clawed frog)).